The chain runs to 304 residues: Insulin-like growth factor-binding protein 2 (304 aa).

The signal sequence occupies residues 1-34; the sequence is MLPRLGGPALPLLLPSLLLLLLLGAGGCGPGVRA. In terms of domain architecture, IGFBP N-terminal spans 36 to 118; sequence VLFRCPPCTP…VTGAGTCEKR (83 aa). Cystine bridges form between Cys-40-Cys-68, Cys-43-Cys-70, Cys-51-Cys-71, Cys-59-Cys-74, Cys-82-Cys-95, Cys-89-Cys-115, Cys-206-Cys-240, Cys-251-Cys-262, and Cys-264-Cys-285. Positions 203-285 constitute a Thyroglobulin type-1 domain; the sequence is RTPCQQELDQ…APTIRGDPEC (83 aa). The short motif at 280-282 is the Cell attachment site element; that stretch reads RGD.

As to quaternary structure, interacts with IGF1. Interacts with IGF2. Interacts (via RGD motif) with integrin alpha5/ITGA5; this interaction induces cell migration, adhesion or apoptosis according to the context. Interacts with PTPRB; this interaction leads to PTPRB dimerization and inactivation. Cleaved by MMP9 leading to release of free IGF2 from IGFBP2-IGF2 complex, which contributes to enhance the motility and the growth of astrocytes. In terms of processing, O-glycosylated. In terms of tissue distribution, in adults, expressed in brain, testes, ovaries, and kidney. Expression in the adult liver is barely detectable.

The protein localises to the secreted. Multifunctional protein that plays a critical role in regulating the availability of IGFs such as IGF1 and IGF2 to their receptors and thereby regulates IGF-mediated cellular processes including proliferation, differentiation, and apoptosis in a cell-type specific manner. Functions coordinately with receptor protein tyrosine phosphatase beta/PTPRB and the IGF1 receptor to regulate IGF1-mediated signaling by stimulating the phosphorylation of PTEN leading to its inactivation and AKT1 activation. Plays a positive role in cell migration via interaction with integrin alpha5/ITGA5 through an RGD motif. Additionally, interaction with ITGA5/ITGB1 enhances the adhesion of endothelial progenitor cells to endothelial cells. Upon mitochondrial damage, facilitates apoptosis with ITGA5 of podocytes, and then activates the phosphorylation of focal adhesion kinase (FAK)-mediated mitochondrial injury. The protein is Insulin-like growth factor-binding protein 2 (Igfbp2) of Rattus norvegicus (Rat).